The chain runs to 390 residues: Lipid-A-disaccharide synthase (390 aa).

The protein belongs to the LpxB family.

The enzyme catalyses a lipid X + a UDP-2-N,3-O-bis[(3R)-3-hydroxyacyl]-alpha-D-glucosamine = a lipid A disaccharide + UDP + H(+). It participates in bacterial outer membrane biogenesis; LPS lipid A biosynthesis. In terms of biological role, condensation of UDP-2,3-diacylglucosamine and 2,3-diacylglucosamine-1-phosphate to form lipid A disaccharide, a precursor of lipid A, a phosphorylated glycolipid that anchors the lipopolysaccharide to the outer membrane of the cell. In Rickettsia felis (strain ATCC VR-1525 / URRWXCal2) (Rickettsia azadi), this protein is Lipid-A-disaccharide synthase.